Reading from the N-terminus, the 469-residue chain is Lactonohydrolase oryH (469 aa).

The N-terminal stretch at 1 to 20 (MYLSLRLVSLALCIAPLASA) is a signal peptide.

The protein belongs to the SMP-30/CGR1 family.

Its pathway is secondary metabolite biosynthesis. Functionally, lactonohydrolase; part of the gene cluster that mediates the biosynthesis of oryzines, natural products with an unusual maleidride backbone. The two subunits of the fungal fatty acid synthase oryfasA and oryfasB probably form octenoic acid. This fatty acid is most likely activated by the acyl-CoA ligase oryP to give octenyl-CoA before the citrate synthase-like protein oryE catalyzes condensation with oxaloacetate to form tricarboxylic acid. The next steps of the pathways are conjectural, but a favorite possible route has been proposed, beginning with decarboxylation and concomitant dehydration by the decarboxylase oryM, followed by tautomerization, which may lead to the production of a diene intermediate. Reduction of this diene intermediate could give the known metabolite piliformic acid. On the pathway to oryzine B and oryzine A, however, hydroxylation of the diene by the alpha-ketoglutarate-dependent dioxygenase oryG and lactonisation by the lactonohydrolases oryH or oryL could give oryzine B directly. Finally, enoyl reduction by the dehydrogenase oryD would then convert oryzine B into oryzine A. The sequence is that of Lactonohydrolase oryH from Aspergillus oryzae (strain ATCC 42149 / RIB 40) (Yellow koji mold).